Here is a 140-residue protein sequence, read N- to C-terminus: MALLTVNLNVVSAEESLFSGSIKSLQITGSEGELGIMPGHAPLLTSLKPGMALITKKDGSEEVIYLSGGMLEVQPNNVTVLADIATRAADLDEQAALEAKQRAEENMNANGADVDFAVAAAQLARAVAQLRVIQATSKHN.

This sequence belongs to the ATPase epsilon chain family. As to quaternary structure, F-type ATPases have 2 components, CF(1) - the catalytic core - and CF(0) - the membrane proton channel. CF(1) has five subunits: alpha(3), beta(3), gamma(1), delta(1), epsilon(1). CF(0) has three main subunits: a, b and c.

The protein localises to the cell inner membrane. Functionally, produces ATP from ADP in the presence of a proton gradient across the membrane. The protein is ATP synthase epsilon chain of Colwellia maris.